We begin with the raw amino-acid sequence, 614 residues long: MKKYDVIVIGAGHAGLEAAFATSNLNLQTALITLDEKGIGMMPCNPSIGGPAKGIVTREIDALGGIQGKAADATTMQMKILNSSKGPGVWAIRAQIDKIAYQRWFKQQIKQQKNLDLIIAEVSDLLVENNIVKGVILSDQKIIQADYVIITTGTYLKSITHRGSVCVDEGADGTKNAKFLSDVLVKLGFELIRLKTGTPARIKKDSIDFTNMVLEPGTNQKIAFSHYHPVYKPYDKQLPCHIIYTNEQTHQIIRENLNKSAMYGGMISGIGPRYCPSIEDKIVKFSEKPRHQIFVEPESYELDSMYLGGFSTSMPIDVQEKMIRSLPGLEDCEILKYAYAIEYDAIDPTQLYPSLESKLVNNLFFAGQINGTSGYEEAAAQGLMAAINVSQKHKNKEPIVLGRDQAYIGVMIDDIVTKGVVEPYRLLTSRAEHRLALRNDNADDRLMKIGFEIGLLKPEVYDQYLNNLKQINEVLNWLKTTTVGQIDDLKFTTLKTNSYLIDYLKRPEVKLNDLLIYCPIKIEDEQIINKVQIQVKFEGYIKNQEENLKQLKRLNNIKLHGIVDYKEVPNISLETIDKLNKIKPLDLEQASRISGVNLTDIAMIKYYLERIKND.

Position 10 to 15 (10 to 15 (GAGHAG)) interacts with FAD. 271 to 285 (GPRYCPSIEDKIVKF) contacts NAD(+).

This sequence belongs to the MnmG family. Homodimer. Heterotetramer of two MnmE and two MnmG subunits. FAD is required as a cofactor.

It is found in the cytoplasm. In terms of biological role, NAD-binding protein involved in the addition of a carboxymethylaminomethyl (cmnm) group at the wobble position (U34) of certain tRNAs, forming tRNA-cmnm(5)s(2)U34. This is tRNA uridine 5-carboxymethylaminomethyl modification enzyme MnmG from Ureaplasma urealyticum serovar 10 (strain ATCC 33699 / Western).